The chain runs to 398 residues: MGRPESITVLGATGSIGVSTLDVISRHPERYQVYALTAERRWQLLATQCLEHQPRYAVIRDADSAGLLEQELRKQGCLTEVLYGADALASVAGASEVDMVMAAIVGAAGLLPTLAAVKAGKKVLLANKEVLVMAGGLFTQAVAEHGAQLLPIDSEHNAIFQCLPNHRPDYLQQGLISSGVRKILLTASGGPFRNTPIHELARVTPEQACAHPNWSMGQKISVDSASMMNKGLELIEACWLFNTSPRQVEVVIHPQSVIHSMVEYIDGSVLAQLGNPDMRTPIAHALAWPERIESGVASLDLIMTARLDFSAPDVQRFPCLRLAQEAVVSGGNAPVLLNAANEIAVAAFLERRLGFDQIPRLISSVMDAIPFSEPETLELVQAADAEARAVAMQLLARW.

NADPH contacts are provided by T13, G14, S15, I16, R40, and N127. Residue K128 coordinates 1-deoxy-D-xylulose 5-phosphate. E129 provides a ligand contact to NADPH. D153 contributes to the Mn(2+) binding site. 1-deoxy-D-xylulose 5-phosphate-binding residues include S154, E155, S188, and H211. Position 155 (E155) interacts with Mn(2+). G217 is an NADPH binding site. 1-deoxy-D-xylulose 5-phosphate-binding residues include S224, N229, K230, and E233. Position 233 (E233) interacts with Mn(2+).

Belongs to the DXR family. Mg(2+) is required as a cofactor. Mn(2+) serves as cofactor.

It carries out the reaction 2-C-methyl-D-erythritol 4-phosphate + NADP(+) = 1-deoxy-D-xylulose 5-phosphate + NADPH + H(+). Its pathway is isoprenoid biosynthesis; isopentenyl diphosphate biosynthesis via DXP pathway; isopentenyl diphosphate from 1-deoxy-D-xylulose 5-phosphate: step 1/6. Its function is as follows. Catalyzes the NADPH-dependent rearrangement and reduction of 1-deoxy-D-xylulose-5-phosphate (DXP) to 2-C-methyl-D-erythritol 4-phosphate (MEP). This is 1-deoxy-D-xylulose 5-phosphate reductoisomerase from Cellvibrio japonicus (strain Ueda107) (Pseudomonas fluorescens subsp. cellulosa).